A 232-amino-acid polypeptide reads, in one-letter code: Pirin-like protein CC_1473 (232 aa).

Belongs to the pirin family.

This Caulobacter vibrioides (strain ATCC 19089 / CIP 103742 / CB 15) (Caulobacter crescentus) protein is Pirin-like protein CC_1473.